The sequence spans 103 residues: Cystatin-A8 (103 aa).

Positions 1-20 are disordered; that stretch reads MESEEMLAGGLTEPRPATPE. The short motif at 51–55 is the Secondary area of contact element; that stretch reads QVVAG.

It belongs to the cystatin family.

The protein localises to the cytoplasm. In terms of biological role, this is an intracellular thiol proteinase inhibitor. This chain is Cystatin-A8, found in Sus scrofa (Pig).